The primary structure comprises 128 residues: Sulfurtransferase TusD (128 aa).

C78 functions as the Cysteine persulfide intermediate in the catalytic mechanism.

This sequence belongs to the DsrE/TusD family. In terms of assembly, heterohexamer, formed by a dimer of trimers. The hexameric TusBCD complex contains 2 copies each of TusB, TusC and TusD. The TusBCD complex interacts with TusE.

It is found in the cytoplasm. Its function is as follows. Part of a sulfur-relay system required for 2-thiolation of 5-methylaminomethyl-2-thiouridine (mnm(5)s(2)U) at tRNA wobble positions. Accepts sulfur from TusA and transfers it in turn to TusE. This is Sulfurtransferase TusD from Shigella flexneri serotype 5b (strain 8401).